We begin with the raw amino-acid sequence, 220 residues long: Translation initiation factor IF-3 (220 aa).

The interval 182 to 220 (TPLVKKDDKEEPATRAVRTITAPPRPTSARLASKPAGNG) is disordered. The segment covering 185–194 (VKKDDKEEPA) has biased composition (basic and acidic residues).

It belongs to the IF-3 family. In terms of assembly, monomer.

The protein resides in the cytoplasm. Functionally, IF-3 binds to the 30S ribosomal subunit and shifts the equilibrium between 70S ribosomes and their 50S and 30S subunits in favor of the free subunits, thus enhancing the availability of 30S subunits on which protein synthesis initiation begins. The sequence is that of Translation initiation factor IF-3 from Synechococcus sp. (strain WH7803).